A 307-amino-acid chain; its full sequence is Fructokinase (307 aa).

Belongs to the carbohydrate kinase PfkB family.

The enzyme catalyses D-fructose + ATP = D-fructose 6-phosphate + ADP + H(+). In terms of biological role, involved in sucrose metabolism. This is Fructokinase (scrK) from Klebsiella pneumoniae.